Here is a 271-residue protein sequence, read N- to C-terminus: Co-chaperone protein DjlA (271 aa).

Residues 1-6 (MQYWGK) lie on the Periplasmic side of the membrane. The helical transmembrane segment at 7-31 (IIGVAVALIMGGGFWGVVLGLLIGH) threads the bilayer. The Cytoplasmic segment spans residues 32 to 271 (MFDKARSRKM…ELIKQQKGFK (240 aa)). A J domain is found at 205–271 (DACNVLGVKP…ELIKQQKGFK (67 aa)).

In terms of assembly, homodimer.

The protein localises to the cell inner membrane. Functionally, regulatory DnaK co-chaperone. Direct interaction between DnaK and DjlA is needed for the induction of the wcaABCDE operon, involved in the synthesis of a colanic acid polysaccharide capsule, possibly through activation of the RcsB/RcsC phosphotransfer signaling pathway. The colanic acid capsule may help the bacterium survive conditions outside the host. In Escherichia coli O6:H1 (strain CFT073 / ATCC 700928 / UPEC), this protein is Co-chaperone protein DjlA.